The primary structure comprises 237 residues: MRPSDRTPAQSRPVTITRQFTAHAEGSVLIEFGETKVLCTASFTEGVPRFLKGQGQGWVTAEYGMLPRSTHSRMDREAARGKQSGRTQEIQRLIGRALRAAVDMKALGENTIVIDCDVIQADGGTRTAAITGACVALVDALNWARGKGLIKTNPLKFLIAAVSVGIYKGEPICDLEYVEDSAAETDMNVVMTETGKIIEIQGTAEGEPFSHEELLSLLDLAKHGIREIVDVQKAALS.

Phosphate contacts are provided by residues R86 and 124–126; that span reads GTR.

This sequence belongs to the RNase PH family. In terms of assembly, homohexameric ring arranged as a trimer of dimers.

It catalyses the reaction tRNA(n+1) + phosphate = tRNA(n) + a ribonucleoside 5'-diphosphate. Phosphorolytic 3'-5' exoribonuclease that plays an important role in tRNA 3'-end maturation. Removes nucleotide residues following the 3'-CCA terminus of tRNAs; can also add nucleotides to the ends of RNA molecules by using nucleoside diphosphates as substrates, but this may not be physiologically important. Probably plays a role in initiation of 16S rRNA degradation (leading to ribosome degradation) during starvation. The protein is Ribonuclease PH of Shewanella loihica (strain ATCC BAA-1088 / PV-4).